The following is a 176-amino-acid chain: Ribose 1,5-bisphosphate phosphokinase PhnN (176 aa).

Position 10 to 17 (10 to 17 (GPSGAGKD)) interacts with ATP.

The protein belongs to the ribose 1,5-bisphosphokinase family.

It carries out the reaction alpha-D-ribose 1,5-bisphosphate + ATP = 5-phospho-alpha-D-ribose 1-diphosphate + ADP. The protein operates within metabolic intermediate biosynthesis; 5-phospho-alpha-D-ribose 1-diphosphate biosynthesis; 5-phospho-alpha-D-ribose 1-diphosphate from D-ribose 5-phosphate (route II): step 3/3. Functionally, catalyzes the phosphorylation of ribose 1,5-bisphosphate to 5-phospho-D-ribosyl alpha-1-diphosphate (PRPP). This Methylobacterium radiotolerans (strain ATCC 27329 / DSM 1819 / JCM 2831 / NBRC 15690 / NCIMB 10815 / 0-1) protein is Ribose 1,5-bisphosphate phosphokinase PhnN.